The sequence spans 803 residues: Zinc finger X-linked protein ZXDB (803 aa).

3 disordered regions span residues methionine 1–aspartate 91, glutamate 120–threonine 140, and alanine 218–glycine 260. The segment covering leucine 13–glycine 26 has biased composition (gly residues). 10 C2H2-type zinc fingers span residues tyrosine 271–histidine 295, phenylalanine 304–histidine 328, phenylalanine 334–histidine 358, phenylalanine 364–histidine 386, tyrosine 393–histidine 417, phenylalanine 424–histidine 448, phenylalanine 454–histidine 478, phenylalanine 484–histidine 508, phenylalanine 514–histidine 538, and serine 547–histidine 572. Residues tyrosine 271–aspartate 577 are required for interaction with ZXDC. The required for transcriptional activation stretch occupies residues glutamine 576–valine 703.

Belongs to the ZXD family. In terms of assembly, self-associates. Interacts with ZXDC and CIITA. As to expression, may be expressed in brain, heart, kidney, liver, lung, muscle and placenta.

It localises to the nucleus. Cooperates with CIITA to promote transcription of MHC class I and MHC class II genes. The sequence is that of Zinc finger X-linked protein ZXDB (ZXDB) from Homo sapiens (Human).